The following is a 343-amino-acid chain: L-threonine 3-dehydrogenase (343 aa).

Residue Cys-40 coordinates Zn(2+). Active-site charge relay system residues include Thr-42 and His-45. The Zn(2+) site is built by His-65, Glu-66, Cys-95, Cys-98, Cys-101, and Cys-109. Residues Ile-177, Asp-197, Arg-202, 264 to 266 (LGI), and 288 to 289 (IY) each bind NAD(+).

Belongs to the zinc-containing alcohol dehydrogenase family. In terms of assembly, homotetramer. Zn(2+) serves as cofactor.

It localises to the cytoplasm. It carries out the reaction L-threonine + NAD(+) = (2S)-2-amino-3-oxobutanoate + NADH + H(+). It functions in the pathway amino-acid degradation; L-threonine degradation via oxydo-reductase pathway; glycine from L-threonine: step 1/2. In terms of biological role, catalyzes the NAD(+)-dependent oxidation of L-threonine to 2-amino-3-ketobutyrate. This Aliivibrio fischeri (strain ATCC 700601 / ES114) (Vibrio fischeri) protein is L-threonine 3-dehydrogenase.